A 247-amino-acid chain; its full sequence is Anionic trypsin (247 aa).

An N-terminal signal peptide occupies residues 1–15 (MNPLLILAFLGAAVA). The propeptide at 16–23 (TPTDDDDK) is activation peptide. In terms of domain architecture, Peptidase S1 spans 24 to 244 (IVGGYTCEEN…FVDWIQSTIA (221 aa)). Intrachain disulfides connect cysteine 30-cysteine 160, cysteine 48-cysteine 64, cysteine 132-cysteine 233, cysteine 139-cysteine 206, cysteine 171-cysteine 185, and cysteine 196-cysteine 220. Histidine 63 functions as the Charge relay system in the catalytic mechanism. Residues glutamate 75, asparagine 77, valine 80, and glutamate 85 each contribute to the Ca(2+) site. Aspartate 107 serves as the catalytic Charge relay system. Catalysis depends on serine 200, which acts as the Charge relay system.

The protein belongs to the peptidase S1 family. The cofactor is Ca(2+).

It localises to the secreted. The protein localises to the extracellular space. It carries out the reaction Preferential cleavage: Arg-|-Xaa, Lys-|-Xaa.. In Canis lupus familiaris (Dog), this protein is Anionic trypsin.